A 510-amino-acid polypeptide reads, in one-letter code: Probable cytosol aminopeptidase (510 aa).

The Mn(2+) site is built by lysine 272 and aspartate 277. Lysine 284 is an active-site residue. Mn(2+)-binding residues include aspartate 296, aspartate 355, and glutamate 357. Arginine 359 is a catalytic residue.

It belongs to the peptidase M17 family. Mn(2+) is required as a cofactor.

The protein localises to the cytoplasm. The catalysed reaction is Release of an N-terminal amino acid, Xaa-|-Yaa-, in which Xaa is preferably Leu, but may be other amino acids including Pro although not Arg or Lys, and Yaa may be Pro. Amino acid amides and methyl esters are also readily hydrolyzed, but rates on arylamides are exceedingly low.. The enzyme catalyses Release of an N-terminal amino acid, preferentially leucine, but not glutamic or aspartic acids.. Its function is as follows. Presumably involved in the processing and regular turnover of intracellular proteins. Catalyzes the removal of unsubstituted N-terminal amino acids from various peptides. This chain is Probable cytosol aminopeptidase, found in Synechococcus sp. (strain JA-2-3B'a(2-13)) (Cyanobacteria bacterium Yellowstone B-Prime).